The primary structure comprises 102 residues: Ferredoxin (102 aa).

2 4Fe-4S ferredoxin-type domains span residues 45–73 (VSVN…ELVE) and 74–102 (TWIE…EVMK). Residues C54, C57, C60, C64, C83, C86, C89, and C93 each contribute to the [4Fe-4S] cluster site.

Requires [4Fe-4S] cluster as cofactor.

The protein operates within membrane lipid metabolism; glycerophospholipid metabolism. Its function is as follows. Ferredoxin that is the specific electron donor for the geranylgeranyl reductase GGR involved in the biosynthesis of archaeal membrane lipids. In Methanosarcina acetivorans (strain ATCC 35395 / DSM 2834 / JCM 12185 / C2A), this protein is Ferredoxin.